We begin with the raw amino-acid sequence, 286 residues long: Structure-specific endonuclease subunit SLX1 (286 aa).

The region spanning 15–98 (SFYGVYILKS…QHAYQTRHIN (84 aa)) is the GIY-YIG domain.

This sequence belongs to the SLX1 family. In terms of assembly, forms a heterodimer with SLX4. A divalent metal cation is required as a cofactor.

It is found in the nucleus. Its function is as follows. Catalytic subunit of the SLX1-SLX4 structure-specific endonuclease that resolves DNA secondary structures generated during DNA repair and recombination. Has endonuclease activity towards branched DNA substrates, introducing single-strand cuts in duplex DNA close to junctions with ss-DNA. The sequence is that of Structure-specific endonuclease subunit SLX1 from Candida dubliniensis (strain CD36 / ATCC MYA-646 / CBS 7987 / NCPF 3949 / NRRL Y-17841) (Yeast).